Here is a 395-residue protein sequence, read N- to C-terminus: Putative transcription factor 079L (395 aa).

The protein belongs to the IIV-6 282R family.

In terms of biological role, transcription activation. The polypeptide is Putative transcription factor 079L (Aedes vexans (Inland floodwater mosquito)).